Consider the following 199-residue polypeptide: Large ribosomal subunit protein mL51 (199 aa).

The N-terminal 15 residues, 1 to 15 (MNSASISRLTSVIRT), are a transit peptide targeting the mitochondrion.

Belongs to the mitochondrion-specific ribosomal protein mL51 family. In terms of assembly, component of the mitochondrial ribosome large subunit (39S) which comprises a 16S rRNA and about 50 distinct proteins.

Its subcellular location is the mitochondrion. This chain is Large ribosomal subunit protein mL51 (mrpl-51), found in Caenorhabditis briggsae.